Reading from the N-terminus, the 614-residue chain is UvrABC system protein C (614 aa).

The GIY-YIG domain maps to 14 to 91 (TSPGCYIHKD…IKENKPKYNI (78 aa)). Residues 196–231 (DKIIDDLKSKMAVAAQSMEFERAAEYRDLIQAIGTL) form the UVR domain. Positions 595-614 (LPQVAEERVDYQTEGNHNEP) are disordered. Residues 599–614 (AEERVDYQTEGNHNEP) are compositionally biased toward basic and acidic residues.

It belongs to the UvrC family. As to quaternary structure, interacts with UvrB in an incision complex.

It localises to the cytoplasm. Its function is as follows. The UvrABC repair system catalyzes the recognition and processing of DNA lesions. UvrC both incises the 5' and 3' sides of the lesion. The N-terminal half is responsible for the 3' incision and the C-terminal half is responsible for the 5' incision. This is UvrABC system protein C from Streptococcus pneumoniae serotype 4 (strain ATCC BAA-334 / TIGR4).